The primary structure comprises 187 residues: Orotate phosphoribosyltransferase (187 aa).

5-phospho-alpha-D-ribose 1-diphosphate contacts are provided by residues Arg-99, Lys-100, Lys-103, His-105, and 125 to 133 (DDVITTGGS). Thr-129 and Arg-157 together coordinate orotate.

This sequence belongs to the purine/pyrimidine phosphoribosyltransferase family. PyrE subfamily. Homodimer. Requires Mg(2+) as cofactor.

It carries out the reaction orotidine 5'-phosphate + diphosphate = orotate + 5-phospho-alpha-D-ribose 1-diphosphate. It participates in pyrimidine metabolism; UMP biosynthesis via de novo pathway; UMP from orotate: step 1/2. Catalyzes the transfer of a ribosyl phosphate group from 5-phosphoribose 1-diphosphate to orotate, leading to the formation of orotidine monophosphate (OMP). The sequence is that of Orotate phosphoribosyltransferase from Leptospira borgpetersenii serovar Hardjo-bovis (strain JB197).